The sequence spans 345 residues: MADTDSFLHLARPLGPVAVGSAPTTAPLNVVIQPQAIFSILDHSLRRNADQERVIGTLLGTRSEDGTEVEIRSTFAVGHTETTDQVEVDMEYQKQMLALHLKANPKEVLVGWYATSSELNTFSALIQNFYSGQGDGTWPHPAVHLTVSTEAGKDIETRAYISAPVGVTAERAADSAAFIPVPYEIRYGEAEKSGLEAISSARDAENRATNIFTDIEALERAIEDVLGMIDRVSRYVESVIDEEAPASTALGQFLLNTLALAPKVEPADIERDFNNHIQDVLVVSYLANTIRTQMELSNRLATAQLTLGGESGGAESGAQRGQRGGKGGRGGQQRNQERGAEEARA.

The MPN domain occupies 30–166 (VVIQPQAIFS…TRAYISAPVG (137 aa)). The segment at 308 to 345 (GGESGGAESGAQRGQRGGKGGRGGQQRNQERGAEEARA) is disordered. The segment covering 322–331 (QRGGKGGRGG) has biased composition (gly residues). The segment covering 335 to 345 (NQERGAEEARA) has biased composition (basic and acidic residues).

Belongs to the eIF-3 subunit F family. In terms of assembly, component of the eukaryotic translation initiation factor 3 (eIF-3) complex.

The protein resides in the cytoplasm. In terms of biological role, component of the eukaryotic translation initiation factor 3 (eIF-3) complex, which is involved in protein synthesis of a specialized repertoire of mRNAs and, together with other initiation factors, stimulates binding of mRNA and methionyl-tRNAi to the 40S ribosome. The eIF-3 complex specifically targets and initiates translation of a subset of mRNAs involved in cell proliferation. This Aspergillus clavatus (strain ATCC 1007 / CBS 513.65 / DSM 816 / NCTC 3887 / NRRL 1 / QM 1276 / 107) protein is Eukaryotic translation initiation factor 3 subunit F.